We begin with the raw amino-acid sequence, 159 residues long: MDMEKLKRMQARGGVRTGDGKGTPRRKVKNVHKSTGMDDKKLQTSLKKLNVQPIQAIEEVNMFKSDGNVIHFAAPKVHAAVPSNTFAIYGNGEDKELTELVPGILNQLGPDSLASLRKLAESYQSMQKAEGGEEKKDDEEDDDDIPDLVEGENFEDKVE.

Disordered regions lie at residues Met1–Asp39 and Gln124–Glu159. Positions Thr23–His32 are enriched in basic residues. An NAC-A/B domain is found at Gly36 to Val101. Acidic residues predominate over residues Lys136–Asn153.

This sequence belongs to the NAC-beta family. In terms of assembly, part of the nascent polypeptide-associated complex (NAC), consisting of EGD2 and EGD1. NAC associates with ribosomes via EGD1.

The protein resides in the cytoplasm. It is found in the nucleus. Functionally, component of the nascent polypeptide-associated complex (NAC), a dynamic component of the ribosomal exit tunnel, protecting the emerging polypeptides from interaction with other cytoplasmic proteins to ensure appropriate nascent protein targeting. The NAC complex also promotes mitochondrial protein import by enhancing productive ribosome interactions with the outer mitochondrial membrane and blocks the inappropriate interaction of ribosomes translating non-secretory nascent polypeptides with translocation sites in the membrane of the endoplasmic reticulum. EGD1 may act as a transcription factor that exert a negative effect on the expression of several genes that are transcribed by RNA polymerase II. This is Nascent polypeptide-associated complex subunit beta (egd1) from Sclerotinia sclerotiorum (strain ATCC 18683 / 1980 / Ss-1) (White mold).